A 457-amino-acid chain; its full sequence is Ribosomal protein uS12 methylthiotransferase RimO (457 aa).

The 120-residue stretch at 9-128 (KKVHFISLGC…ILKNSDEGEK (120 aa)) folds into the MTTase N-terminal domain. Residues Cys-18, Cys-54, Cys-88, Cys-163, Cys-167, and Cys-170 each contribute to the [4Fe-4S] cluster site. In terms of domain architecture, Radical SAM core spans 149–384 (SQPGHRAYLK…MEVQQNISRE (236 aa)). The region spanning 387-455 (SDFVGKTLQV…EYDLIGEIVV (69 aa)) is the TRAM domain.

Belongs to the methylthiotransferase family. RimO subfamily. It depends on [4Fe-4S] cluster as a cofactor.

It is found in the cytoplasm. The catalysed reaction is L-aspartate(89)-[ribosomal protein uS12]-hydrogen + (sulfur carrier)-SH + AH2 + 2 S-adenosyl-L-methionine = 3-methylsulfanyl-L-aspartate(89)-[ribosomal protein uS12]-hydrogen + (sulfur carrier)-H + 5'-deoxyadenosine + L-methionine + A + S-adenosyl-L-homocysteine + 2 H(+). In terms of biological role, catalyzes the methylthiolation of an aspartic acid residue of ribosomal protein uS12. In Bdellovibrio bacteriovorus (strain ATCC 15356 / DSM 50701 / NCIMB 9529 / HD100), this protein is Ribosomal protein uS12 methylthiotransferase RimO.